We begin with the raw amino-acid sequence, 281 residues long: Proteasome subunit beta (281 aa).

The propeptide at 1–53 is removed in mature form; by autocatalysis; sequence MEANTRSTGRLPAAFLTPGSSSFMDFLSDHQPELLPGKRQLPPTQGVIEAPHG. The active-site Nucleophile is T54.

The protein belongs to the peptidase T1B family. In terms of assembly, the 20S proteasome core is composed of 14 alpha and 14 beta subunits that assemble into four stacked heptameric rings, resulting in a barrel-shaped structure. The two inner rings, each composed of seven catalytic beta subunits, are sandwiched by two outer rings, each composed of seven alpha subunits. The catalytic chamber with the active sites is on the inside of the barrel. Has a gated structure, the ends of the cylinder being occluded by the N-termini of the alpha-subunits. Is capped by the proteasome-associated ATPase, ARC.

It is found in the cytoplasm. It carries out the reaction Cleavage of peptide bonds with very broad specificity.. It participates in protein degradation; proteasomal Pup-dependent pathway. The formation of the proteasomal ATPase ARC-20S proteasome complex, likely via the docking of the C-termini of ARC into the intersubunit pockets in the alpha-rings, may trigger opening of the gate for substrate entry. Interconversion between the open-gate and close-gate conformations leads to a dynamic regulation of the 20S proteasome proteolysis activity. In terms of biological role, component of the proteasome core, a large protease complex with broad specificity involved in protein degradation. This chain is Proteasome subunit beta, found in Streptomyces scabiei (strain 87.22).